We begin with the raw amino-acid sequence, 439 residues long: MARKRTNKRNNSDKENGNVGVVQNKDSASSKTTEPARLTKHKSLARKPSQNFITRTIWTFLLLGIFFTALAMGHFWVVLLVTIVQIGVYKEVIAIASVPSREKDLPWTRFINWYFLMTTLYYAYGESIYAYFHHLFIMDSFMLPLVLHHRFISFMLYIIGFVLFVASLKKGNYKFQFSQFCWTHMTLLLVVGQSHFMINNLFEGLFWFFVPVCYVVCNDVFAYLCGKMFGKHPLIQVSPKKTVEGFLGGWICTVVIGSLISYVLMHFKYFICPTRDLSTSAFSGLNCTPNSVFLPHTYTIPAVFVDTFRLPETITLAPIYFHLAIFATFSSLIAPFGGFFASGLKRAFKIKDFGASIPGHGGLTDRMDCQFLNGVFVYMYFQSFIAEKSTSVADLLDTAVYSLTTTQQVQLVEDLQNYLISHGKTSVQAICSKLLQNSK.

Positions 1 to 37 (MARKRTNKRNNSDKENGNVGVVQNKDSASSKTTEPAR) are disordered. At S12 the chain carries Phosphoserine. Over residues 24–33 (NKDSASSKTT) the composition is skewed to polar residues. 7 consecutive transmembrane segments (helical) span residues 52-71 (FITR…TALA), 76-98 (WVVL…IASV), 110-130 (FINW…SIYA), 145-165 (LVLH…VLFV), 180-199 (FCWT…FMIN), 245-265 (GFLG…YVLM), and 321-341 (FHLA…GFFA).

The protein belongs to the CDS family. Mg(2+) serves as cofactor.

It is found in the endoplasmic reticulum membrane. The catalysed reaction is a 1,2-diacyl-sn-glycero-3-phosphate + CTP + H(+) = a CDP-1,2-diacyl-sn-glycerol + diphosphate. It participates in phospholipid metabolism; CDP-diacylglycerol biosynthesis; CDP-diacylglycerol from sn-glycerol 3-phosphate: step 3/3. Supplies CDP-diacylglycerol, which may play an important role as both a precursor to phosphoinositide biosynthesis in the plasma membrane and as a negative effector of phosphatidylinositol 4-kinase activity, thereby exerting an effect on cell proliferation via a lipid-dependent signal transduction cascade. The protein is Putative phosphatidate cytidylyltransferase of Schizosaccharomyces pombe (strain 972 / ATCC 24843) (Fission yeast).